Here is a 631-residue protein sequence, read N- to C-terminus: tRNA uridine 5-carboxymethylaminomethyl modification enzyme MnmG (631 aa).

Position 14–19 (14–19 (GGGHAG)) interacts with FAD. Position 274–288 (274–288 (GPRYCPSIEDKIHRF)) interacts with NAD(+).

The protein belongs to the MnmG family. As to quaternary structure, homodimer. Heterotetramer of two MnmE and two MnmG subunits. The cofactor is FAD.

It localises to the cytoplasm. NAD-binding protein involved in the addition of a carboxymethylaminomethyl (cmnm) group at the wobble position (U34) of certain tRNAs, forming tRNA-cmnm(5)s(2)U34. The chain is tRNA uridine 5-carboxymethylaminomethyl modification enzyme MnmG from Pseudomonas paraeruginosa (strain DSM 24068 / PA7) (Pseudomonas aeruginosa (strain PA7)).